The sequence spans 378 residues: Mannitol-1-phosphate 5-dehydrogenase (378 aa).

4-15 (SVHFGAGNIGRG) lines the NAD(+) pocket.

This sequence belongs to the mannitol dehydrogenase family.

It carries out the reaction D-mannitol 1-phosphate + NAD(+) = beta-D-fructose 6-phosphate + NADH + H(+). The protein is Mannitol-1-phosphate 5-dehydrogenase of Streptococcus pneumoniae (strain ATCC BAA-255 / R6).